Reading from the N-terminus, the 89-residue chain is Acylphosphatase (89 aa).

The 87-residue stretch at 3–89 (ALFIKISGRV…QNFTSFDIVP (87 aa)) folds into the Acylphosphatase-like domain. Catalysis depends on residues Arg-18 and Asn-36.

The protein belongs to the acylphosphatase family.

It catalyses the reaction an acyl phosphate + H2O = a carboxylate + phosphate + H(+). In Pseudothermotoga lettingae (strain ATCC BAA-301 / DSM 14385 / NBRC 107922 / TMO) (Thermotoga lettingae), this protein is Acylphosphatase (acyP).